A 393-amino-acid polypeptide reads, in one-letter code: Glycerol-3-phosphate dehydrogenase [NAD(+)] 1 (393 aa).

Residues 45–50 (GSGNWG), Phe-133, Lys-157, and Ala-190 each bind NAD(+). Lys-157 contacts substrate. Lys-250 serves as the catalytic Proton acceptor. The NAD(+) site is built by Arg-316 and Gln-345. A substrate-binding site is contributed by 316-317 (RN).

This sequence belongs to the NAD-dependent glycerol-3-phosphate dehydrogenase family.

It catalyses the reaction sn-glycerol 3-phosphate + NAD(+) = dihydroxyacetone phosphate + NADH + H(+). The protein is Glycerol-3-phosphate dehydrogenase [NAD(+)] 1 (gpd1) of Cyberlindnera jadinii (Torula yeast).